We begin with the raw amino-acid sequence, 183 residues long: Adenine phosphoribosyltransferase (183 aa).

This sequence belongs to the purine/pyrimidine phosphoribosyltransferase family. As to quaternary structure, homodimer.

It localises to the cytoplasm. The enzyme catalyses AMP + diphosphate = 5-phospho-alpha-D-ribose 1-diphosphate + adenine. The protein operates within purine metabolism; AMP biosynthesis via salvage pathway; AMP from adenine: step 1/1. Functionally, catalyzes a salvage reaction resulting in the formation of AMP, that is energically less costly than de novo synthesis. In Sodalis glossinidius (strain morsitans), this protein is Adenine phosphoribosyltransferase.